The sequence spans 489 residues: Tripartite motif-containing protein 10 (489 aa).

The RING-type zinc-finger motif lies at 16–61 (CPICQGTLREPVTIDCGHNFCRGCLTRYCEIPGPESEESLSCPLCK). The B box-type zinc finger occupies 94–135 (EVEDACPEHGEKIYFFCEEDEAQLCVVCRETGQHGAHTVRFL). Zn(2+) contacts are provided by cysteine 99, histidine 102, cysteine 121, and histidine 127. Positions 144–180 (EQIQKCLVCLRKEREEIQETQSRENKRIQVLLTQVAT) form a coiled coil. In terms of domain architecture, B30.2/SPRY spans 292–486 (QEMKTFLEKL…FSLSCQEGAV (195 aa)).

It belongs to the TRIM/RBCC family. In terms of assembly, interacts with IFNAR1; this interaction prevents association of IFNAR1 with TYK2. As to expression, expressed in embryonic liver.

It is found in the cytoplasm. E3 ligase that plays an essential role in the differentiation and survival of terminal erythroid cells. May directly bind to PTEN and promote its ubiquitination, resulting in its proteasomal degradation and activation of hypertrophic signaling. In addition, plays a role in immune response regulation by repressing the phosphorylation of STAT1 and STAT2 in the interferon/JAK/STAT signaling pathway independent of its E3 ligase activity. Mechanistically, interacts with the intracellular domain of IFNAR1 and thereby inhibits the association between TYK2 and IFNAR1. The sequence is that of Tripartite motif-containing protein 10 (Trim10) from Mus musculus (Mouse).